Reading from the N-terminus, the 319-residue chain is Beta-sarcoglycan (319 aa).

The segment covering 1–10 (MAAAAAAAAA) has biased composition (low complexity). The tract at residues 1-33 (MAAAAAAAAAEQQSSNGPVKKSMREKAVERRNV) is disordered. At 1–66 (MAAAAAAAAA…GLRGRKGNLA (66 aa)) the chain is on the cytoplasmic side. Basic and acidic residues predominate over residues 22-33 (SMREKAVERRNV). Residues 67–87 (ICVIILLFILAVINLIITLVI) form a helical; Signal-anchor for type II membrane protein membrane-spanning segment. At 88 to 318 (WAVIRIGPNG…QISDNPCGNT (231 aa)) the chain is on the extracellular side. Residues Asn159, Asn212, and Asn259 are each glycosylated (N-linked (GlcNAc...) asparagine). Disulfide bonds link Cys289/Cys315 and Cys291/Cys308.

The protein belongs to the sarcoglycan beta/delta/gamma/zeta family. Cross-link to form 2 major subcomplexes: one consisting of SGCB, SGCD and SGCG and the other consisting of SGCB and SGCD. The association between SGCB and SGCG is particularly strong while SGCA is loosely associated with the other sarcoglycans. In terms of processing, disulfide bonds are present.

It is found in the cell membrane. The protein resides in the sarcolemma. The protein localises to the cytoplasm. It localises to the cytoskeleton. Component of the sarcoglycan complex, a subcomplex of the dystrophin-glycoprotein complex which forms a link between the F-actin cytoskeleton and the extracellular matrix. In Pongo abelii (Sumatran orangutan), this protein is Beta-sarcoglycan (SGCB).